A 411-amino-acid polypeptide reads, in one-letter code: 2,3-bisphosphoglycerate-independent phosphoglycerate mutase (411 aa).

The protein belongs to the BPG-independent phosphoglycerate mutase family. A-PGAM subfamily. Homotetramer. It depends on Mg(2+) as a cofactor.

The enzyme catalyses (2R)-2-phosphoglycerate = (2R)-3-phosphoglycerate. Its pathway is carbohydrate degradation; glycolysis; pyruvate from D-glyceraldehyde 3-phosphate: step 3/5. With respect to regulation, inhibited to approximately 20% by EDTA. Functionally, catalyzes the interconversion of 2-phosphoglycerate and 3-phosphoglycerate. In Pyrococcus furiosus (strain ATCC 43587 / DSM 3638 / JCM 8422 / Vc1), this protein is 2,3-bisphosphoglycerate-independent phosphoglycerate mutase (apgM).